The chain runs to 203 residues: E3 ubiquitin-protein ligase RNF152 (203 aa).

The RING-type zinc finger occupies 12 to 55 (CQICFNYYSPRRRPKLLDCKHTCCSVCLQQMRTSQKDVRCPWCR). The necessary for interaction with RRAGA stretch occupies residues 106 to 165 (ISKERTLLPGDMGCRLLPGSQQKSLTVVTIPAEQQPLQGGAPPEAVEEEPDRRGVVKSST). Residues 139–158 (QQPLQGGAPPEAVEEEPDRR) are disordered. The helical transmembrane segment at 167-187 (SGVCTVILVACVLVFLLGIVL) threads the bilayer.

The protein belongs to the RNF152 family. In terms of assembly, interacts with RRAGA (inactive GDP-bound form); stimulated by amino acid starvation. Interacts with SEC16A. Post-translationally, ubiquitinated. Autoubiquitinated in vitro, leading to its degradation by the proteasome.

It localises to the lysosome membrane. The catalysed reaction is S-ubiquitinyl-[E2 ubiquitin-conjugating enzyme]-L-cysteine + [acceptor protein]-L-lysine = [E2 ubiquitin-conjugating enzyme]-L-cysteine + N(6)-ubiquitinyl-[acceptor protein]-L-lysine.. The protein operates within protein modification; protein ubiquitination. Functionally, E3 ubiquitin-protein ligase that acts as a negative regulator of mTORC1 signaling by mediating ubiquitination of RagA/RRAGA and RHEB. Catalyzes 'Lys-63'-linked polyubiquitination of RagA/RRAGA in response to amino acid starvation, thereby regulating mTORC1 signaling. Also mediates monoubiquitination of RHEB, promoting its association with the TSC-TBC complex and subsequent inhibition. Also mediates 'Lys-48'-linked polyubiquitination of target proteins and their subsequent targeting to the proteasome for degradation. Induces apoptosis when overexpressed. The polypeptide is E3 ubiquitin-protein ligase RNF152 (Mus musculus (Mouse)).